The following is a 359-amino-acid chain: MPTIEVKSSNPYQVRIDKQLNTEIVTTAQLSGAENVAIITQPPLLERAGTLEKMLAQAGLASHVLAVPDAETGKTLEVAGRCWDQLGEWGFSRSDLIIGFGGGAATDLAGFVAAAWMRGIKVIQVPTTLLAMVDAAVGGKTGINTAAGKNLVGAFHEPIAVFIDVDHLDSLPQDEIIAGSAEIIKTGFIADPRILELYEKDPAACLLKDGHLPELIARSIAVKSKVVSQDLKESGLREILNYGHTFGHAVELRENFSWRHGNAVAVGMVFVAELANIRGLISDELVERHRKILKSIGLPTSYSQGHFEELHQGMKHDKKNRNSMIRFVALRDISDVVRLEGPTDEELFQAYSRLALEMS.

NAD(+) is bound by residues 69 to 74 (DAETGK), 103 to 107 (GAATD), 127 to 128 (TT), K140, and K149. The Zn(2+) site is built by E182, H244, and H260.

The protein belongs to the sugar phosphate cyclases superfamily. Dehydroquinate synthase family. It depends on Co(2+) as a cofactor. The cofactor is Zn(2+). Requires NAD(+) as cofactor.

It is found in the cytoplasm. The enzyme catalyses 7-phospho-2-dehydro-3-deoxy-D-arabino-heptonate = 3-dehydroquinate + phosphate. Its pathway is metabolic intermediate biosynthesis; chorismate biosynthesis; chorismate from D-erythrose 4-phosphate and phosphoenolpyruvate: step 2/7. Catalyzes the conversion of 3-deoxy-D-arabino-heptulosonate 7-phosphate (DAHP) to dehydroquinate (DHQ). This is 3-dehydroquinate synthase from Corynebacterium diphtheriae (strain ATCC 700971 / NCTC 13129 / Biotype gravis).